The chain runs to 124 residues: Large ribosomal subunit protein uL29 (124 aa).

This sequence belongs to the universal ribosomal protein uL29 family.

This chain is Large ribosomal subunit protein uL29 (RPL35), found in Triticum aestivum (Wheat).